We begin with the raw amino-acid sequence, 517 residues long: GMP synthase [glutamine-hydrolyzing] (517 aa).

The Glutamine amidotransferase type-1 domain occupies 11-202 (KIIVLDFGSQ…AFKVCGAKAN (192 aa)). The active-site Nucleophile is Cys88. Catalysis depends on residues His176 and Glu178. In terms of domain architecture, GMPS ATP-PPase spans 203–392 (WTMDDFIEMQ…LGIPHDLVWR (190 aa)). 230–236 (SGGVDSS) contributes to the ATP binding site.

In terms of assembly, homodimer.

It catalyses the reaction XMP + L-glutamine + ATP + H2O = GMP + L-glutamate + AMP + diphosphate + 2 H(+). Its pathway is purine metabolism; GMP biosynthesis; GMP from XMP (L-Gln route): step 1/1. Catalyzes the synthesis of GMP from XMP. The protein is GMP synthase [glutamine-hydrolyzing] of Lactobacillus johnsonii (strain CNCM I-12250 / La1 / NCC 533).